The primary structure comprises 611 residues: tRNA uridine 5-carboxymethylaminomethyl modification enzyme MnmG (611 aa).

Gly14–Gly19 contacts FAD. Gly274 to Phe288 serves as a coordination point for NAD(+).

The protein belongs to the MnmG family. As to quaternary structure, homodimer. Heterotetramer of two MnmE and two MnmG subunits. It depends on FAD as a cofactor.

It is found in the cytoplasm. In terms of biological role, NAD-binding protein involved in the addition of a carboxymethylaminomethyl (cmnm) group at the wobble position (U34) of certain tRNAs, forming tRNA-cmnm(5)s(2)U34. The chain is tRNA uridine 5-carboxymethylaminomethyl modification enzyme MnmG from Chlamydia felis (strain Fe/C-56) (Chlamydophila felis).